The sequence spans 147 residues: Hemoglobin subunit beta (147 aa).

The residue at position 2 (V2) is an N-acetylvaline. The Globin domain maps to H3–H147. Residue T13 is modified to Phosphothreonine. S45 bears the Phosphoserine mark. At K60 the chain carries N6-acetyllysine. Residue H64 coordinates heme b. K83 carries the N6-acetyllysine modification. H93 serves as a coordination point for heme b. An S-nitrosocysteine modification is found at C94. K145 is modified (N6-acetyllysine).

The protein belongs to the globin family. Heterotetramer of two alpha chains and two beta chains. Red blood cells.

Functionally, involved in oxygen transport from the lung to the various peripheral tissues. The chain is Hemoglobin subunit beta (HBB) from Aotus azarae (Azara's night monkey).